The primary structure comprises 208 residues: Small ribosomal subunit protein uS5 (208 aa).

Positions 28-91 (LEERLIYANR…EKAKKNVIRV (64 aa)) constitute an S5 DRBM domain.

This sequence belongs to the universal ribosomal protein uS5 family. Part of the 30S ribosomal subunit. Contacts proteins S4 and S8.

Functionally, with S4 and S12 plays an important role in translational accuracy. In terms of biological role, located at the back of the 30S subunit body where it stabilizes the conformation of the head with respect to the body. This Aquifex aeolicus (strain VF5) protein is Small ribosomal subunit protein uS5.